Consider the following 111-residue polypeptide: Nucleoid-associated protein NMC1380 (111 aa).

It belongs to the YbaB/EbfC family. In terms of assembly, homodimer.

It localises to the cytoplasm. The protein resides in the nucleoid. Binds to DNA and alters its conformation. May be involved in regulation of gene expression, nucleoid organization and DNA protection. This chain is Nucleoid-associated protein NMC1380, found in Neisseria meningitidis serogroup C / serotype 2a (strain ATCC 700532 / DSM 15464 / FAM18).